Reading from the N-terminus, the 563-residue chain is MIDIPPYPPLDPSNYDLIVVGTGVSESVLAAAASSSGSSVLHLDPNPFYGSHFASLSLPDLTSFLHSNSVSPPPSPSSPPLPPSNNHDFISVDLVNRSLYSSVEISSFESEILEEHSRRFNVDLAGPRVVFCADESINLMLKSGANNYVEFKSIDASFVGDSSGELRNVPDSRAAIFKDKSLTLLEKNQLMKFFKLVQSHLASSTEKDDSTTVKISEEDMESPFVDFLSKMRLPPKIKSIILYAIAMLDYDQDNTETCRHLLKTKEGIDRLALYITSMGRFSNALGALIYPIYGQGELPQAFCRRAAVKGCIYVLRMPITALLLDKETGGYKGVRLASGQEIFSQKLILDPCVTVGLESLSSLTDQQNETLSVLVPKSMINKEKIARGVCVIRGSVKANVSNALVVYPPKSLFPEQLTAIRVLQLGSGLAVCPADMHVLYLSTLCDNDDQGIKALLSAMSNLISLPVPENRQSDSVVENDTSETKPILLWRALYVQELVKGEFGGTISSMPSPDGNLNYNEIVESAVKLYEKLMGSEELFKEETSPAENTTEEENDGGVEIED.

The interval 538–563 (ELFKEETSPAENTTEEENDGGVEIED) is disordered. The segment covering 550 to 563 (TTEEENDGGVEIED) has biased composition (acidic residues).

This sequence belongs to the Rab GDI family. In terms of assembly, heterotrimer composed of the alpha subunit RGTA, the beta subunit RGTB and REP; within this trimer, RGTA and RGTB form the catalytic component, while REP mediates peptide substrate binding. As to expression, expressed in roots, leaves and flowers.

It localises to the cytoplasm. Its function is as follows. Substrate-binding subunit of the Rab geranylgeranyltransferase (GGTase) complex. Binds unprenylated Rab proteins and presents the substrate peptide to the catalytic component composed of the alpha subunit RGTA and the beta subunit RGTB. Preferentially binds the GDP-bound form of Rab and stimulates geranylgeranylation of various Rab GTPases in vitro. The chain is Rab escort protein 1 from Arabidopsis thaliana (Mouse-ear cress).